Consider the following 90-residue polypeptide: UPF0335 protein RPB_1426 (90 aa).

This sequence belongs to the UPF0335 family.

The chain is UPF0335 protein RPB_1426 from Rhodopseudomonas palustris (strain HaA2).